A 369-amino-acid polypeptide reads, in one-letter code: Cyanuric acid amidohydrolase (369 aa).

The tract at residues 1–100 is RU A; it reads MPRRAEILRL…HWLVIAAREA (100 aa). Substrate contacts are provided by residues Arg-53 and 81-82; that span reads SG. An RU B region spans residues 106–242; that stretch reads ALAVGQARTP…HEVVVMGMSP (137 aa). Residue Lys-155 is part of the active site. Residues Arg-187 and 225-226 each bind substrate; that span reads SA. Catalysis depends on Ser-225, which acts as the Nucleophile. The segment at 248–369 is RU C; the sequence is LVIDHAVMAD…ARRSGAAGPA (122 aa). Glu-296 is a Mg(2+) binding site. Substrate is bound by residues Arg-323 and 342 to 343; that span reads SG. Mg(2+) is bound by residues Ala-345, Gln-348, Gly-349, Pro-350, and Gly-353.

The protein belongs to the cyclic amide hydrolase (CyAH) family. Homotetramer.

The enzyme catalyses cyanurate + H2O = 1-carboxybiuret + H(+). Its pathway is xenobiotic degradation; atrazine degradation; biuret from cyanurate: step 1/1. Its activity is regulated as follows. Inhibited by barbituric acid. Functionally, responsible for the hydrolysis of cyanuric acid, an intermediate formed during catabolism of s-triazine based compounds in herbicides such as atrazine and polymers such as melamine. Catalyzes the hydrolytic opening of the s-triazine ring of cyanuric acid (2,4,6-trihydroxy-s-triazine) to yield carbon dioxide and carboxybiuret, which spontaneously decarboxylates to biuret. The protein is Cyanuric acid amidohydrolase of Methylobacterium sp. (strain 4-46).